The following is a 79-amino-acid chain: Sperm-specific basic nuclear protein SP4 (79 aa).

A disordered region spans residues 1-79 (MSKVSGGSRR…ARDYGSDYRS (79 aa)). Positions 9–60 (RRTRARRPMSNRRGRRSQSAAHRSRAQRRRRRTGTTRRARTSTARRARTRTA) are enriched in basic residues. 2 consecutive repeats follow at residues 45–52 (RRARTSTA) and 53–60 (RRARTRTA). Residues 61–79 (RRSDLTRMMARDYGSDYRS) are compositionally biased toward basic and acidic residues.

Its subcellular location is the nucleus. This chain is Sperm-specific basic nuclear protein SP4 (sp4-a), found in Xenopus laevis (African clawed frog).